We begin with the raw amino-acid sequence, 445 residues long: Phosphoglucosamine mutase (445 aa).

Serine 102 (phosphoserine intermediate) is an active-site residue. The Mg(2+) site is built by serine 102, aspartate 241, aspartate 243, and aspartate 245. A Phosphoserine modification is found at serine 102.

Belongs to the phosphohexose mutase family. Mg(2+) serves as cofactor. In terms of processing, activated by phosphorylation.

The enzyme catalyses alpha-D-glucosamine 1-phosphate = D-glucosamine 6-phosphate. Its function is as follows. Catalyzes the conversion of glucosamine-6-phosphate to glucosamine-1-phosphate. This Escherichia coli O7:K1 (strain IAI39 / ExPEC) protein is Phosphoglucosamine mutase.